Consider the following 198-residue polypeptide: uncharacterized protein (198 aa).

A disordered region spans residues 72-95; the sequence is ESEEQYDSDDDNDKLVLNDDEDDE. Residues 75–94 show a composition bias toward acidic residues; it reads EQYDSDDDNDKLVLNDDEDD. A coiled-coil region spans residues 106–136; it reads EATNITNINKNIENIKNDMSNLNNMNDSNQK.

This is an uncharacterized protein from Plasmodium falciparum (isolate 3D7).